Reading from the N-terminus, the 497-residue chain is UPF0371 protein cu0538 (497 aa).

The protein belongs to the UPF0371 family.

This is UPF0371 protein cu0538 from Corynebacterium urealyticum (strain ATCC 43042 / DSM 7109).